A 341-amino-acid chain; its full sequence is Phosphoribosylformylglycinamidine cyclo-ligase (341 aa).

It belongs to the AIR synthase family.

It localises to the cytoplasm. The enzyme catalyses 2-formamido-N(1)-(5-O-phospho-beta-D-ribosyl)acetamidine + ATP = 5-amino-1-(5-phospho-beta-D-ribosyl)imidazole + ADP + phosphate + H(+). Its pathway is purine metabolism; IMP biosynthesis via de novo pathway; 5-amino-1-(5-phospho-D-ribosyl)imidazole from N(2)-formyl-N(1)-(5-phospho-D-ribosyl)glycinamide: step 2/2. This chain is Phosphoribosylformylglycinamidine cyclo-ligase, found in Synechococcus elongatus (strain ATCC 33912 / PCC 7942 / FACHB-805) (Anacystis nidulans R2).